The sequence spans 272 residues: Heat stress transcription factor A-7a (272 aa).

The interval 1–26 is disordered; it reads MMNPFLPEGCDPPPPPQPMEGLHENA. The DNA-binding element occupies 27–121; it reads PPPFLTKTFE…LLKNIKRRNP (95 aa). A hydrophobic repeat HR-A/B region spans residues 132–186; that stretch reads ACNELRREKQVLMMEIVSLRQQQQTTKSYIKAMEQRIEGTERKQRQMMSFLARAM. A Bipartite nuclear localization signal motif is present at residues 201–216; it reads KKIKELEDNESAKRKR. Residues 203 to 212 show a composition bias toward basic and acidic residues; the sequence is IKELEDNESA. The interval 203-223 is disordered; that stretch reads IKELEDNESAKRKRGSSSMSE. Residues 256–265 carry the AHA motif; it reads DGFWEELLSD.

The protein belongs to the HSF family. Class A subfamily. As to quaternary structure, homotrimer. Post-translationally, exhibits temperature-dependent phosphorylation.

It localises to the nucleus. Functionally, transcriptional activator that specifically binds DNA sequence 5'-AGAAnnTTCT-3' known as heat shock promoter elements (HSE). In Arabidopsis thaliana (Mouse-ear cress), this protein is Heat stress transcription factor A-7a (HSFA7A).